The chain runs to 136 residues: Organic hydroperoxide resistance protein OhrB (136 aa).

Belongs to the OsmC/Ohr family.

Functionally, involved in organic hydroperoxide resistance. The sequence is that of Organic hydroperoxide resistance protein OhrB (ohrB) from Bacillus subtilis (strain 168).